The chain runs to 85 residues: Large ribosomal subunit protein bL27 (85 aa).

This sequence belongs to the bacterial ribosomal protein bL27 family.

The sequence is that of Large ribosomal subunit protein bL27 from Cellvibrio japonicus (strain Ueda107) (Pseudomonas fluorescens subsp. cellulosa).